We begin with the raw amino-acid sequence, 444 residues long: Acyl-CoA 6-desaturase (444 aa).

The Cytoplasmic segment spans residues 1-131 (MGKGGNQGEG…DMNLFKTNHV (131 aa)). A Cytochrome b5 heme-binding domain is found at 18-95 (MPTFSWEEIQ…LKPLLIGELA (78 aa)). The chain crosses the membrane as a helical span at residues 132–152 (FFLLLLAHIIALESIAWFTVF). The Lumenal segment spans residues 153 to 157 (YFGNG). A helical transmembrane segment spans residues 158–178 (WIPTLITAFVLATSQAQAGWL). Residues 179–264 (QHDYGHLSVY…KYLPYNHQHE (86 aa)) are Cytoplasmic-facing. The Histidine box-1 motif lies at 180-184 (HDYGH). Residues 217–221 (HFQHH) carry the Histidine box-2 motif. The chain crosses the membrane as a helical span at residues 265–285 (YFFLIGPPLLIPMYFQYQIIM). Residues 286 to 305 (TMIVHKNWVDLAWAISYYIR) are Lumenal-facing. A helical transmembrane segment spans residues 306–326 (FFVTYIPFYGILGALLFLNFI). Residues 327–444 (RFLESHWFVW…KLWLDAYLHK (118 aa)) are Cytoplasmic-facing. Residues 382 to 386 (QIEHH) carry the Histidine box-3 motif.

Belongs to the fatty acid desaturase type 1 family.

The protein localises to the endoplasmic reticulum membrane. The catalysed reaction is (9Z,12Z)-octadecadienoyl-CoA + 2 Fe(II)-[cytochrome b5] + O2 + 2 H(+) = (6Z,9Z,12Z)-octadecatrienoyl-CoA + 2 Fe(III)-[cytochrome b5] + 2 H2O. It carries out the reaction (9Z,12Z,15Z)-octadecatrienoyl-CoA + 2 Fe(II)-[cytochrome b5] + O2 + 2 H(+) = (6Z,9Z,12Z,15Z)-octadecatetraenoyl-CoA + 2 Fe(III)-[cytochrome b5] + 2 H2O. It catalyses the reaction (9Z,12Z,15Z,18Z,21Z)-tetracosapentaenoyl-CoA + 2 Fe(II)-[cytochrome b5] + O2 + 2 H(+) = (6Z,9Z,12Z,15Z,18Z,21Z)-tetracosahexaenoyl-CoA + 2 Fe(III)-[cytochrome b5] + 2 H2O. The enzyme catalyses (11E)-octadecenoyl-CoA + 2 Fe(II)-[cytochrome b5] + O2 + 2 H(+) = (6Z,11E)-octadecadienoyl-CoA + 2 Fe(III)-[cytochrome b5] + 2 H2O. The catalysed reaction is (11Z,14Z)-eicosadienoyl-CoA + 2 Fe(II)-[cytochrome b5] + O2 + 2 H(+) = (8Z,11Z,14Z)-eicosatrienoyl-CoA + 2 Fe(III)-[cytochrome b5] + 2 H2O. It carries out the reaction (11Z,14Z,17Z)-eicosatrienoyl-CoA + 2 Fe(II)-[cytochrome b5] + O2 + 2 H(+) = (8Z,11Z,14Z,17Z)-eicosatetraenoyl-CoA + 2 Fe(III)-[cytochrome b5] + 2 H2O. It participates in lipid metabolism; polyunsaturated fatty acid biosynthesis. Involved in the biosynthesis of highly unsaturated fatty acids (HUFA) from the essential polyunsaturated fatty acids (PUFA) linoleic acid (LA) (18:2n-6) and alpha-linolenic acid (ALA) (18:3n-3) precursors, acting as a fatty acyl-coenzyme A (CoA) desaturase that introduces a cis double bond at carbon 6 of the fatty acyl chain. Catalyzes the first and rate limiting step in this pathway which is the desaturation of LA (18:2n-6) and ALA (18:3n-3) into gamma-linoleate (GLA) (18:3n-6) and stearidonate (18:4n-3), respectively. Subsequently, in the biosynthetic pathway of HUFA n-3 series, it desaturates tetracosapentaenoate (24:5n-3) to tetracosahexaenoate (24:6n-3), which is then converted to docosahexaenoate (DHA)(22:6n-3), an important lipid for nervous system function. It can also desaturate (11E)-octadecenoate (trans-vaccenoate) at carbon 6 generating (6Z,11E)-octadecadienoate. In addition to Delta-6 activity, this enzyme exhibits Delta-8 activity with slight biases toward n-3 fatty acyl-CoA substrates. This chain is Acyl-CoA 6-desaturase (FADS2), found in Macaca fascicularis (Crab-eating macaque).